Reading from the N-terminus, the 92-residue chain is MASLGHILVFCVGLLTMAKAESPKEHDPFTYDYQSLQIGGLVIAGILFILGILIVLSRRCRCKFNQQQRTGEPDEEEGTFRSSIRRLSTRRR.

The N-terminal stretch at 1–20 (MASLGHILVFCVGLLTMAKA) is a signal peptide. The Extracellular portion of the chain corresponds to 21–35 (ESPKEHDPFTYDYQS). A helical membrane pass occupies residues 36-56 (LQIGGLVIAGILFILGILIVL). At 57–92 (SRRCRCKFNQQQRTGEPDEEEGTFRSSIRRLSTRRR) the chain is on the cytoplasmic side. C60 carries the S-palmitoyl cysteine lipid modification. At C62 the chain carries S-glutathionyl cysteine; alternate. A lipid anchor (S-palmitoyl cysteine; alternate) is attached at C62. The disordered stretch occupies residues 65–92 (NQQQRTGEPDEEEGTFRSSIRRLSTRRR). T79 is modified (phosphothreonine). At S82 the chain carries Phosphoserine. S83 carries the post-translational modification Phosphoserine; by PKA and PKC. Residues 83–92 (SIRRLSTRRR) show a composition bias toward basic residues. At S88 the chain carries Phosphoserine; by PKA. Residue T89 is modified to Phosphothreonine; by PKC.

It belongs to the FXYD family. In terms of assembly, homotetramer. Monomer. Regulatory subunit of the sodium/potassium-transporting ATPase (NKA) which is composed of a catalytic alpha subunit, an auxiliary non-catalytic beta subunit and an additional regulatory subunit. The monomeric form associates with NKA while the oligomeric form does not. Interacts with the catalytic alpha-1 subunit ATP1A1. Also interacts with the catalytic alpha-2 and alpha-3 subunits ATP1A2 and ATP1A3. Very little interaction with ATP1A1, ATP1A2 or ATP1A3 when phosphorylated at Ser-83. Interacts with the non-catalytic beta-1 subunit ATP1B1. Oxidative stress decreases interaction with ATP1A1 but increases interaction with ATP1B1. Post-translationally, major plasma membrane substrate for cAMP-dependent protein kinase (PKA) and protein kinase C (PKC) in several different tissues. Phosphorylated in response to insulin and adrenergic stimulation. Phosphorylation at Ser-88 stimulates sodium/potassium-transporting ATPase activity while the unphosphorylated form inhibits sodium/potassium-transporting ATPase activity. Phosphorylation increases tetramerization, decreases binding to ATP1A1 and reduces inhibition of ATP1A1 activity. Phosphorylation at Ser-83 leads to greatly reduced interaction with ATP1A1, ATP1A2 and ATP1A3. May be phosphorylated by DMPK. Palmitoylation increases half-life and stability and is enhanced upon phosphorylation at Ser-88 by PKA. Highest expression in skeletal muscle and heart. Moderate levels in brain, placenta, lung, liver, pancreas, uterus, bladder, prostate, small intestine and colon with mucosal lining. Very low levels in kidney, colon and small intestine without mucosa, prostate without endothelial lining, spleen, and testis.

The protein resides in the cell membrane. It localises to the sarcolemma. Its subcellular location is the apical cell membrane. The protein localises to the membrane. It is found in the caveola. The protein resides in the T-tubule. In terms of biological role, associates with and regulates the activity of the sodium/potassium-transporting ATPase (NKA) which transports Na(+) out of the cell and K(+) into the cell. Inhibits NKA activity in its unphosphorylated state and stimulates activity when phosphorylated. Reduces glutathionylation of the NKA beta-1 subunit ATP1B1, thus reversing glutathionylation-mediated inhibition of ATP1B1. Contributes to female sexual development by maintaining the excitability of neurons which secrete gonadotropin-releasing hormone. The chain is Phospholemman from Homo sapiens (Human).